Consider the following 233-residue polypeptide: Bcl-2-like protein 1 (233 aa).

The short motif at 4 to 24 (SNRELVVDFLSYKLSQKGYSW) is the BH4 element. Residues 27 to 73 (FSDVEENRTEAPEETEPERETPSAINGNPSWHLADSPAVNGATGHSS) are disordered. The residue at position 49 (Ser-49) is a Phosphoserine; by PLK3. Ser-62 is subject to Phosphoserine; by CDK1. Positions 86–100 (VKQALREAGDEFELR) match the BH3 motif. The BH1 signature appears at 129-148 (ELFRDGVNWGRIVAFFSFGG). The short motif at 180–195 (PWIQENGGWDTFVDLY) is the BH2 element. Residues 210 to 226 (FNRWFLTGMTVAGVVLL) traverse the membrane as a helical segment.

The protein belongs to the Bcl-2 family. As to quaternary structure, homodimer. Interacts with BCL2L11. Interacts with BAD. Interacts with PGAM5. Interacts with HEBP2. Interacts with p53/TP53 and BBC3; interaction with BBC3 disrupts the interaction with p53/TP53. Interacts with ATP5F1A and ATP5F1B; the interactions mediate the association of isoform Bcl-X(L) with the mitochondrial membrane ATP synthase F(1)F(0) ATP synthase. Interacts with VDAC1. Interacts with BCL2L11 (via BH3). Interacts with RNF183. Interacts with GIMAP3/IAN4 and GIMAP5/IAN5. Interacts with GIMAP5 and HSPA8/HSC70; the interaction between HSPA8 and BCL2L1 is impaired in the absence of GIMAP5. Interacts with isoform 4 of CLU; this interaction releases and activates BAX and promotes cell death. In terms of assembly, forms heterodimers with BAX, BAK or BCL2; heterodimerization with BAX does not seem to be required for anti-apoptotic activity. Interacts with isoform 1 of SIVA1; the interaction inhibits the anti-apoptotic activity. Interacts with IKZF3. Interacts with RTL10/BOP. Interacts with DNM1L and CLTA; DNM1L and BCL2L1 isoform BCL-X(L) may form a complex in synaptic vesicles that also contains clathrin and MFF. Interacts (via the loop between motifs BH4 and BH3) with NLRP1 (via LRR repeats), but not with NLRP2, NLRP3, NLRP4, PYCARD, nor MEFV. Interacts with BECN1. Proteolytically cleaved by caspases during apoptosis. The cleaved protein, lacking the BH4 motif, has pro-apoptotic activity. Post-translationally, phosphorylated on Ser-62 by CDK1. This phosphorylation is partial in normal mitotic cells, but complete in G2-arrested cells upon DNA-damage, thus promoting subsequent apoptosis probably by triggering caspases-mediated proteolysis. Phosphorylated by PLK3, leading to regulate the G2 checkpoint and progression to cytokinesis during mitosis. Phosphorylation at Ser-49 appears during the S phase and G2, disappears rapidly in early mitosis during prometaphase, metaphase and early anaphase, and re-appears during telophase and cytokinesis. In terms of processing, ubiquitinated by RNF183 during prolonged ER stress, leading to degradation by the proteosome. In terms of tissue distribution, expressed in most tissues. Bcl-X(beta) is specifically expressed in cerebellum, heart, and thymus. In the ovary, the predominant form is Bcl-X(L), with a small but detectable level of Bcl-X(S).

It is found in the mitochondrion inner membrane. It localises to the mitochondrion outer membrane. Its subcellular location is the mitochondrion matrix. The protein localises to the cytoplasmic vesicle. The protein resides in the secretory vesicle. It is found in the synaptic vesicle membrane. It localises to the cytoplasm. Its subcellular location is the cytosol. The protein localises to the cytoskeleton. The protein resides in the microtubule organizing center. It is found in the centrosome. It localises to the nucleus membrane. Functionally, potent inhibitor of cell death. Inhibits activation of caspases. Appears to regulate cell death by blocking the voltage-dependent anion channel (VDAC) by binding to it and preventing the release of the caspase activator, CYC1, from the mitochondrial membrane. Also acts as a regulator of G2 checkpoint and progression to cytokinesis during mitosis. Its function is as follows. Isoform Bcl-X(L) also regulates presynaptic plasticity, including neurotransmitter release and recovery, number of axonal mitochondria as well as size and number of synaptic vesicle clusters. During synaptic stimulation, increases ATP availability from mitochondria through regulation of mitochondrial membrane ATP synthase F(1)F(0) activity and regulates endocytic vesicle retrieval in hippocampal neurons through association with DMN1L and stimulation of its GTPase activity in synaptic vesicles. May attenuate inflammation impairing NLRP1-inflammasome activation, hence CASP1 activation and IL1B release. In terms of biological role, isoform Bcl-X(S) promotes apoptosis. The protein is Bcl-2-like protein 1 (Bcl2l1) of Rattus norvegicus (Rat).